Reading from the N-terminus, the 104-residue chain is Vacuolar ATPase assembly integral membrane protein VMA21 (104 aa).

The Cytoplasmic portion of the chain corresponds to 1-21; the sequence is MSNRVSTGKMAMAPQESVQPA. A helical transmembrane segment spans residues 22-42; the sequence is VLYKLVLFALLMAVVPIGTYF. Over 43–65 the chain is Lumenal; sequence STLNYLWDGASRCGFPSGLCSTT. The helical transmembrane segment at 66–86 threads the bilayer; the sequence is FAAISAIAAANLILVGYVVVA. Over 87–104 the chain is Cytoplasmic; it reads FREDAASRTGPLPEKKTS. Residues 101-104 carry the Prevents secretion from ER motif; sequence KKTS.

This sequence belongs to the VMA21 family.

Its subcellular location is the endoplasmic reticulum membrane. It localises to the endoplasmic reticulum-Golgi intermediate compartment membrane. The protein resides in the cytoplasmic vesicle. It is found in the COPII-coated vesicle membrane. In terms of biological role, required for the assembly of the V0 complex of the vacuolar ATPase (V-ATPase) in the endoplasmic reticulum. The sequence is that of Vacuolar ATPase assembly integral membrane protein VMA21 from Cryptococcus neoformans var. neoformans serotype D (strain B-3501A) (Filobasidiella neoformans).